A 141-amino-acid polypeptide reads, in one-letter code: 6,7-dimethyl-8-ribityllumazine synthase (141 aa).

5-amino-6-(D-ribitylamino)uracil is bound by residues Phe14, 46 to 48, and 70 to 72; these read VFD and CVI. 75–76 lines the (2S)-2-hydroxy-3-oxobutyl phosphate pocket; it reads ET. The active-site Proton donor is His78. Leu103 contributes to the 5-amino-6-(D-ribitylamino)uracil binding site. Arg118 is a binding site for (2S)-2-hydroxy-3-oxobutyl phosphate.

Forms an icosahedral capsid composed of 60 subunits, arranged as a dodecamer of pentamers.

The catalysed reaction is (2S)-2-hydroxy-3-oxobutyl phosphate + 5-amino-6-(D-ribitylamino)uracil = 6,7-dimethyl-8-(1-D-ribityl)lumazine + phosphate + 2 H2O + H(+). Its pathway is cofactor biosynthesis; riboflavin biosynthesis; riboflavin from 2-hydroxy-3-oxobutyl phosphate and 5-amino-6-(D-ribitylamino)uracil: step 1/2. Functionally, catalyzes the formation of 6,7-dimethyl-8-ribityllumazine by condensation of 5-amino-6-(D-ribitylamino)uracil with 3,4-dihydroxy-2-butanone 4-phosphate. This is the penultimate step in the biosynthesis of riboflavin. This chain is 6,7-dimethyl-8-ribityllumazine synthase (ribH), found in Methanocaldococcus jannaschii (strain ATCC 43067 / DSM 2661 / JAL-1 / JCM 10045 / NBRC 100440) (Methanococcus jannaschii).